We begin with the raw amino-acid sequence, 663 residues long: Bifunctional polymyxin resistance protein ArnA (663 aa).

The tract at residues 1 to 307 is formyltransferase ArnAFT; it reads MSPKAVVFAY…EFGLVEGSQL (307 aa). The Proton donor; for formyltransferase activity role is filled by histidine 106. Residues arginine 116 and 138 to 142 contribute to the (6R)-10-formyltetrahydrofolate site; that span reads VKRAD. A dehydrogenase ArnADH region spans residues 317–663; it reads RRTRVLILGV…EAMAEKADMR (347 aa). NAD(+)-binding positions include aspartate 350 and 371–372; that span reads DI. Residues alanine 396, tyrosine 401, and 435–436 each bind UDP-alpha-D-glucuronate; that span reads TS. Residue glutamate 437 is the Proton acceptor; for decarboxylase activity of the active site. Residues arginine 463, asparagine 494, 528–537, and tyrosine 615 each bind UDP-alpha-D-glucuronate; that span reads RLVDGGAQKR. Arginine 621 acts as the Proton donor; for decarboxylase activity in catalysis.

The protein in the N-terminal section; belongs to the Fmt family. UDP-L-Ara4N formyltransferase subfamily. It in the C-terminal section; belongs to the NAD(P)-dependent epimerase/dehydratase family. UDP-glucuronic acid decarboxylase subfamily. As to quaternary structure, homohexamer, formed by a dimer of trimers.

It catalyses the reaction UDP-alpha-D-glucuronate + NAD(+) = UDP-beta-L-threo-pentopyranos-4-ulose + CO2 + NADH. It carries out the reaction UDP-4-amino-4-deoxy-beta-L-arabinose + (6R)-10-formyltetrahydrofolate = UDP-4-deoxy-4-formamido-beta-L-arabinose + (6S)-5,6,7,8-tetrahydrofolate + H(+). It participates in nucleotide-sugar biosynthesis; UDP-4-deoxy-4-formamido-beta-L-arabinose biosynthesis; UDP-4-deoxy-4-formamido-beta-L-arabinose from UDP-alpha-D-glucuronate: step 1/3. The protein operates within nucleotide-sugar biosynthesis; UDP-4-deoxy-4-formamido-beta-L-arabinose biosynthesis; UDP-4-deoxy-4-formamido-beta-L-arabinose from UDP-alpha-D-glucuronate: step 3/3. It functions in the pathway bacterial outer membrane biogenesis; lipopolysaccharide biosynthesis. In terms of biological role, bifunctional enzyme that catalyzes the oxidative decarboxylation of UDP-glucuronic acid (UDP-GlcUA) to UDP-4-keto-arabinose (UDP-Ara4O) and the addition of a formyl group to UDP-4-amino-4-deoxy-L-arabinose (UDP-L-Ara4N) to form UDP-L-4-formamido-arabinose (UDP-L-Ara4FN). The modified arabinose is attached to lipid A and is required for resistance to polymyxin and cationic antimicrobial peptides. The protein is Bifunctional polymyxin resistance protein ArnA of Pseudomonas savastanoi pv. phaseolicola (strain 1448A / Race 6) (Pseudomonas syringae pv. phaseolicola (strain 1448A / Race 6)).